A 221-amino-acid chain; its full sequence is Leucine rich adaptor protein 1-like (221 aa).

Position 1 is an N-acetylmethionine (Met1). The tract at residues 1–81 is disordered; sequence MEDGPLPDLR…SGSPRRSHPS (81 aa). 2 stretches are compositionally biased toward basic and acidic residues: residues 8 to 21 and 28 to 39; these read DLRD…RKVP and LRGEEPAPREGA. The span at 48 to 75 shows a compositional bias: low complexity; it reads SCSSSSSCSSFAPSVSSSSSSSPASGSP.

The sequence is that of Leucine rich adaptor protein 1-like (Lurap1l) from Rattus norvegicus (Rat).